Here is a 1106-residue protein sequence, read N- to C-terminus: MKLKEVDRTAMQAWSPAQNHPIYLATGTSAQQLDATFSTNASLEIFELDLSDPSLDMKSCATFSSSHRYHKLIWGPYKMDSKGDVSGVLIAGGENGNIILYDPSKIIAGDKEVVIAQNDKHTGPVRALDVNIFQTNLVASGANESEIYIWDLNNFATPMTPGAKTQPPEDISCIAWNRQVQHILASASPSGRATVWDLRKNEPIIKVSDHSNRMHCSGLAWHPDVATQMVLASEDDRLPVIQMWDLRFASSPLRVLENHARGILAIAWSMADPELLLSCGKDAKILCSNPNTGEVLYELPTNTQWCFDIQWCPRNPAVLSAASFDGRISVYSIMGGSTDGLRQKQVDKLSSSFGNLDPFGTGQPLPPLQIPQQTAQHSIVLPLKKPPKWIRRPVGASFSFGGKLVTFENVRMPSHQGAEQQQQQHHVFISQVVTEKEFLSRSDQLQQAVQSQGFISYCQKKIDASQTEFEKNVWSFLKVNFEDDSRGKYLELLGYRKEDLGKKIALALNKVDGANVALKDSDQVAQSDGEESPAAEEQLLGEHIKEEKEESEFLPSSGGTFNISVSGDIDGLITQALLTGNFESAVDLCLHDNRMADAIILAIAGGQELLARTQKKYFAKSQSKITRLITAVVMKNWKEIVESCDLKNWREALAAVLTYAKPDEFSALCDLLGTRLENEGDSLLQTQACLCYICAGNVEKLVACWTKAQDGSHPLSLQDLIEKVVILRKAVQLTQAMDTSTVGVLLAAKMSQYANLLAAQGSIAAALAFLPDNTNQPNIMQLRDRLCRAQGEPVAGHESPKIPYEEQQLPKGRPGPVAGHHQMPRVQTQQYYPHGENPPPPGFIMHGNVNPNAAGQLPTSPGHMHTQVPPYPQPQRPQNGWNDPPALNRVPKKKKMPENFMPPVPITSPIMNPLGDPQSQMLQQQPSAPVPLSSQSSFPQPHLPGGQHFHGIQQPLGQTGMPPSFSKPNIEGAPGAPIGNTFQHVQSLPTKKITKKPIPDEHLILKTTFEDLIQRCLSSATDPQTKRKLDDASKRLEFLYDKLREQTLSPTITSGLHNIARSIETRNYSEGLTMHTHIVSTSNFSETSAFMPVLKVVLTQANKLGV.

7 WD repeats span residues 4–47, 68–111, 120–160, 166–206, 209–254, 258–298, and 301–342; these read KEVD…EIFE, RYHK…AGDK, KHTG…TPMT, QPPE…PIIK, DHSN…SPLR, NHAR…VLYE, and TNTQ…DGLR. Residues 161–471 are interaction with SEC13; the sequence is PGAKTQPPED…IDASQTEFEK (311 aa). Residues 397–430 form a WD 8; interaction with SEC13 repeat; the sequence is SFSFGGKLVTFENVRMPSHQGAEQQQQQHHVFIS. Residues Ser527 and Ser532 each carry the phosphoserine modification. Residue Lys647 forms a Glycyl lysine isopeptide (Lys-Gly) (interchain with G-Cter in ubiquitin) linkage. Position 799 is a phosphoserine (Ser799). The tract at residues 800–999 is interaction with PDCD6; sequence PKIPYEEQQL…TKKITKKPIP (200 aa). The ALG-2-binding site motif-2 (ABS-2) signature appears at 842 to 848; it reads GFIMHGN. The interval 859–980 is disordered; sequence TSPGHMHTQV…EGAPGAPIGN (122 aa). Polar residues predominate over residues 917-939; sequence PQSQMLQQQPSAPVPLSSQSSFP. Thr1047 is subject to Phosphothreonine. Ser1049 is modified (phosphoserine). Lys1103 is covalently cross-linked (Glycyl lysine isopeptide (Lys-Gly) (interchain with G-Cter in ubiquitin)).

Belongs to the WD repeat SEC31 family. As to quaternary structure, COPII is composed of at least 5 proteins: the SEC23/24 complex, the SEC13/31 complex and SAR1. SEC13 and SEC31 make a 2:2 tetramer that forms the edge element of the COPII outer coat. The tetramer self-assembles in multiple copies to form the complete polyhedral cage. Interacts (via WD 8) with SEC13. Interacts with PDCD6; interaction takes place in response to cytosolic calcium increase and leads to bridge together the BCR(KLHL12) complex and SEC31A, leading to monoubiquitination. Interacts with KLHL12. In terms of processing, monoubiquitinated by the BCR(KLHL12) E3 ubiquitin ligase complex, leading to regulate the size of COPII coats.

Its subcellular location is the cytoplasm. The protein localises to the cytoplasmic vesicle. It is found in the COPII-coated vesicle membrane. It localises to the endoplasmic reticulum membrane. In terms of biological role, component of the coat protein complex II (COPII) which promotes the formation of transport vesicles from the endoplasmic reticulum (ER). The coat has two main functions, the physical deformation of the endoplasmic reticulum membrane into vesicles and the selection of cargo molecules. The polypeptide is Protein transport protein Sec31A (SEC31A) (Pongo abelii (Sumatran orangutan)).